Consider the following 80-residue polypeptide: UPF0270 protein AHA_0994 (80 aa).

This sequence belongs to the UPF0270 family.

In Aeromonas hydrophila subsp. hydrophila (strain ATCC 7966 / DSM 30187 / BCRC 13018 / CCUG 14551 / JCM 1027 / KCTC 2358 / NCIMB 9240 / NCTC 8049), this protein is UPF0270 protein AHA_0994.